The sequence spans 262 residues: Thiazole synthase (262 aa).

The Schiff-base intermediate with DXP role is filled by Lys-96. Residues Gly-157, 184–185 (AG), and 206–207 (NT) contribute to the 1-deoxy-D-xylulose 5-phosphate site.

Belongs to the ThiG family. In terms of assembly, homotetramer. Forms heterodimers with either ThiH or ThiS.

The protein resides in the cytoplasm. The enzyme catalyses [ThiS sulfur-carrier protein]-C-terminal-Gly-aminoethanethioate + 2-iminoacetate + 1-deoxy-D-xylulose 5-phosphate = [ThiS sulfur-carrier protein]-C-terminal Gly-Gly + 2-[(2R,5Z)-2-carboxy-4-methylthiazol-5(2H)-ylidene]ethyl phosphate + 2 H2O + H(+). It participates in cofactor biosynthesis; thiamine diphosphate biosynthesis. Catalyzes the rearrangement of 1-deoxy-D-xylulose 5-phosphate (DXP) to produce the thiazole phosphate moiety of thiamine. Sulfur is provided by the thiocarboxylate moiety of the carrier protein ThiS. In vitro, sulfur can be provided by H(2)S. The chain is Thiazole synthase from Legionella pneumophila (strain Paris).